Here is a 594-residue protein sequence, read N- to C-terminus: Spermidine/putrescine import ATP-binding protein PotA (594 aa).

The ABC transporter domain maps to 24-435 (IEIKKINKTY…PANNWVANFI (412 aa)). 57 to 64 (GPSGCGKT) is a binding site for ATP. The insert stretch occupies residues 125–304 (RKPIENVSAD…EWFDKKKLTR (180 aa)).

This sequence belongs to the ABC transporter superfamily. Spermidine/putrescine importer (TC 3.A.1.11.1) family. In terms of assembly, the complex is composed of two ATP-binding proteins (PotA), two transmembrane proteins (PotB and PotC) and a solute-binding protein (PotD).

The protein resides in the cell membrane. The enzyme catalyses ATP + H2O + polyamine-[polyamine-binding protein]Side 1 = ADP + phosphate + polyamineSide 2 + [polyamine-binding protein]Side 1.. Its function is as follows. Part of the ABC transporter complex PotABCD involved in spermidine/putrescine import. Responsible for energy coupling to the transport system. In Malacoplasma penetrans (strain HF-2) (Mycoplasma penetrans), this protein is Spermidine/putrescine import ATP-binding protein PotA.